Here is a 379-residue protein sequence, read N- to C-terminus: uncharacterized protein (379 aa).

29–36 (GPLNSGKT) lines the ATP pocket.

Belongs to the archaeal ATPase family.

This is an uncharacterized protein from Methanocaldococcus jannaschii (strain ATCC 43067 / DSM 2661 / JAL-1 / JCM 10045 / NBRC 100440) (Methanococcus jannaschii).